The sequence spans 139 residues: Small ribosomal subunit protein bS16 (139 aa).

The segment at 85–108 is disordered; sequence ESKSGKKPAKKATTKEASAKKPTD. The span at 97-108 shows a compositional bias: basic and acidic residues; that stretch reads TTKEASAKKPTD.

The protein belongs to the bacterial ribosomal protein bS16 family.

The chain is Small ribosomal subunit protein bS16 from Leuconostoc mesenteroides subsp. mesenteroides (strain ATCC 8293 / DSM 20343 / BCRC 11652 / CCM 1803 / JCM 6124 / NCDO 523 / NBRC 100496 / NCIMB 8023 / NCTC 12954 / NRRL B-1118 / 37Y).